We begin with the raw amino-acid sequence, 531 residues long: Chaperonin GroEL, chloroplastic (531 aa).

ATP contacts are provided by residues 30–33 (TLGP), 87–91 (DGTTT), glycine 415, 481–483 (NAA), and aspartate 497.

This sequence belongs to the chaperonin (HSP60) family. In terms of assembly, forms a cylinder of 14 subunits composed of two heptameric rings stacked back-to-back. Interacts with the co-chaperonin GroES.

It localises to the plastid. Its subcellular location is the chloroplast. It catalyses the reaction ATP + H2O + a folded polypeptide = ADP + phosphate + an unfolded polypeptide.. Together with its co-chaperonin GroES, plays an essential role in assisting protein folding. The GroEL-GroES system forms a nano-cage that allows encapsulation of the non-native substrate proteins and provides a physical environment optimized to promote and accelerate protein folding. This chain is Chaperonin GroEL, chloroplastic, found in Emiliania huxleyi (Coccolithophore).